Reading from the N-terminus, the 440-residue chain is Origin recognition complex subunit 4 (440 aa).

Glycine 64–serine 71 is an ATP binding site.

The protein belongs to the ORC4 family. In terms of assembly, ORC is composed of six subunits.

Its subcellular location is the nucleus. In terms of biological role, component of the origin recognition complex (ORC) that binds origins of replication. DNA-binding is ATP-dependent, however specific DNA sequences that define origins of replication have not been identified so far. ORC is required to assemble the pre-replication complex necessary to initiate DNA replication. In Dictyostelium discoideum (Social amoeba), this protein is Origin recognition complex subunit 4 (orcD).